Here is a 283-residue protein sequence, read N- to C-terminus: D-alanine aminotransferase (283 aa).

Y32 contributes to the substrate binding site. R51 is a pyridoxal 5'-phosphate binding site. Substrate is bound by residues R99 and H101. K146 (proton acceptor) is an active-site residue. K146 bears the N6-(pyridoxal phosphate)lysine mark. E178 is a binding site for pyridoxal 5'-phosphate.

The protein belongs to the class-IV pyridoxal-phosphate-dependent aminotransferase family. Homodimer. Requires pyridoxal 5'-phosphate as cofactor.

It carries out the reaction D-alanine + 2-oxoglutarate = D-glutamate + pyruvate. Acts on the D-isomers of alanine, leucine, aspartate, glutamate, aminobutyrate, norvaline and asparagine. The enzyme transfers an amino group from a substrate D-amino acid to the pyridoxal phosphate cofactor to form pyridoxamine and an alpha-keto acid in the first half-reaction. The second-half reaction is the reverse of the first, transferring the amino group from the pyridoxamine to a second alpha-keto acid to form the product D-amino acid via a ping-pong mechanism. This is an important process in the formation of D-alanine and D-glutamate, which are essential bacterial cell wall components. The protein is D-alanine aminotransferase (dat) of Bacillus sp. (strain YM-1).